A 546-amino-acid chain; its full sequence is Chaperonin GroEL (546 aa).

ATP-binding positions include 30–33 (TLGP), K51, 87–91 (DGTTT), G415, 479–481 (NAA), and D495. The tract at residues 525–546 (PEPKKDMPPMPGGGMGGMGGMY) is disordered. The span at 536–546 (GGGMGGMGGMY) shows a compositional bias: gly residues.

This sequence belongs to the chaperonin (HSP60) family. As to quaternary structure, forms a cylinder of 14 subunits composed of two heptameric rings stacked back-to-back. Interacts with the co-chaperonin GroES.

The protein resides in the cytoplasm. It carries out the reaction ATP + H2O + a folded polypeptide = ADP + phosphate + an unfolded polypeptide.. Together with its co-chaperonin GroES, plays an essential role in assisting protein folding. The GroEL-GroES system forms a nano-cage that allows encapsulation of the non-native substrate proteins and provides a physical environment optimized to promote and accelerate protein folding. The sequence is that of Chaperonin GroEL from Solidesulfovibrio magneticus (strain ATCC 700980 / DSM 13731 / RS-1) (Desulfovibrio magneticus).